Here is a 298-residue protein sequence, read N- to C-terminus: GTP-binding protein REM 1 (298 aa).

The tract at residues 1–73 is disordered; that stretch reads MTLNTEQEAK…DDWSSESSDS (73 aa). Residues 35–55 show a composition bias toward polar residues; the sequence is TVPSTQSQHPRLGQSASLNPP. Position 51 is a phosphoserine (Ser-51). Over residues 63–73 the composition is skewed to low complexity; sequence PDDWSSESSDS. GTP-binding positions include 87 to 94 and 195 to 198; these read GDPGVGKT and NKAD. The tract at residues 268-287 is calmodulin-binding; it reads ARRFLARLTARSARRRALKA.

This sequence belongs to the small GTPase superfamily. RGK family. In terms of assembly, in vitro, interacts with calmodulin in a calcium-dependent manner. In terms of tissue distribution, most highly expressed in the endothelial lining of the blood vessels in uterus and heart. Lower levels found in spleen, lymph node, kidney and testis. Also found in cells with secretory function such as the islets of Langerhans, lobule/duct epithelium in the breast, bile duct epithelium in the liver, surface epithelium in the endometrial glands of the uterus, colon mucosa and acinar cells in the pancreas and the prostate.

Its function is as follows. Promotes endothelial cell sprouting and actin cytoskeletal reorganization. May be involved in angiogenesis. May function in Ca(2+) signaling. The sequence is that of GTP-binding protein REM 1 (REM1) from Homo sapiens (Human).